Here is a 187-residue protein sequence, read N- to C-terminus: Putative acyl-coenzyme A oxidase At3g06690 (187 aa).

The interval 1-21 (MTKEPIYSPRMLHRDPDSPRP) is disordered.

It belongs to the acyl-CoA oxidase family.

It catalyses the reaction a 2,3-saturated acyl-CoA + O2 = a (2E)-enoyl-CoA + H2O2. The sequence is that of Putative acyl-coenzyme A oxidase At3g06690 from Arabidopsis thaliana (Mouse-ear cress).